The sequence spans 280 residues: uncharacterized protein (280 aa).

Disordered stretches follow at residues 20 to 41 (DVKKSQQQQQQQPQAPPQQQQQ), 170 to 199 (INSPPPPQEEEKPQLSKKEEPEWLKGKDKA), and 251 to 280 (GNSKPYTSSNATNKPFTTASKSTNSYSFSF). Residues 25–41 (QQQQQQQPQAPPQQQQQ) show a composition bias toward low complexity. A compositionally biased stretch (basic and acidic residues) spans 178–199 (EEEKPQLSKKEEPEWLKGKDKA).

This is an uncharacterized protein from Dictyostelium discoideum (Social amoeba).